The sequence spans 156 residues: B3 domain-containing protein At5g26805 (156 aa).

A DNA-binding region (TF-B3) is located at residues 57-155 (KFQLPMEKIR…MFCFSVLDGR (99 aa)).

The protein localises to the nucleus. The protein is B3 domain-containing protein At5g26805 of Arabidopsis thaliana (Mouse-ear cress).